A 195-amino-acid chain; its full sequence is Imidazoleglycerol-phosphate dehydratase (195 aa).

This sequence belongs to the imidazoleglycerol-phosphate dehydratase family.

It localises to the cytoplasm. The enzyme catalyses D-erythro-1-(imidazol-4-yl)glycerol 3-phosphate = 3-(imidazol-4-yl)-2-oxopropyl phosphate + H2O. The protein operates within amino-acid biosynthesis; L-histidine biosynthesis; L-histidine from 5-phospho-alpha-D-ribose 1-diphosphate: step 6/9. This is Imidazoleglycerol-phosphate dehydratase from Hydrogenovibrio crunogenus (strain DSM 25203 / XCL-2) (Thiomicrospira crunogena).